A 245-amino-acid polypeptide reads, in one-letter code: Geranylgeranylglyceryl phosphate synthase (245 aa).

Asp24 and Ser54 together coordinate Mg(2+). Sn-glycerol 1-phosphate is bound by residues 172–178 (YLEAGSG), 203–204 (GG), and 225–226 (GT).

It belongs to the GGGP/HepGP synthase family. Group II subfamily. Mg(2+) serves as cofactor.

It localises to the cytoplasm. It catalyses the reaction sn-glycerol 1-phosphate + (2E,6E,10E)-geranylgeranyl diphosphate = sn-3-O-(geranylgeranyl)glycerol 1-phosphate + diphosphate. It participates in membrane lipid metabolism; glycerophospholipid metabolism. In terms of biological role, prenyltransferase that catalyzes the transfer of the geranylgeranyl moiety of geranylgeranyl diphosphate (GGPP) to the C3 hydroxyl of sn-glycerol-1-phosphate (G1P). This reaction is the first ether-bond-formation step in the biosynthesis of archaeal membrane lipids. In Staphylothermus marinus (strain ATCC 43588 / DSM 3639 / JCM 9404 / F1), this protein is Geranylgeranylglyceryl phosphate synthase.